An 86-amino-acid chain; its full sequence is Diphthamide biosynthesis protein 3 (86 aa).

The 57-residue stretch at 4 to 60 (YHDEVEIEDFEYDEEEEMYYYPCPCGDRFQISKEELIEGEEVATCPSCSLVIKVIYD) folds into the DPH-type MB domain. Fe cation contacts are provided by cysteine 26, cysteine 28, cysteine 48, and cysteine 51.

It belongs to the DPH3 family. Component of the 2-(3-amino-3-carboxypropyl)histidine synthase complex composed of Dph1, Dph2, Dph3 and a NADH-dependent reductase. Fe(2+) serves as cofactor.

It carries out the reaction [3Fe-4S](1+)-[protein] + Fe(2+)-[Dph3] = [3Fe-4S](0)-[protein] + Fe(3+)-[Dph3]. It catalyses the reaction 2 [3Fe-4S](0)-[protein] + 2 Fe(2+)-[Dph3] + NADH = 2 [4Fe-4S](1+)-[protein] + 2 [Dph3] + NAD(+) + H(+). Its pathway is protein modification; peptidyl-diphthamide biosynthesis. Functionally, required for the first step of diphthamide biosynthesis, a post-translational modification of histidine which occurs in elongation factor 2. Dph1 and Dph2 transfer a 3-amino-3-carboxypropyl (ACP) group from S-adenosyl-L-methionine (SAM) to a histidine residue, the reaction is assisted by a reduction system comprising Dph3 and a NADH-dependent reductase. Acts as an electron donor to reduce the Fe-S cluster in Dph1-Dph2 keeping the [4Fe-4S] clusters in the active and reduced state. Restores iron to Dph1-Dph2 iron-sulfur clusters which have degraded from [4Fe-4S] to [3Fe-4S] by donating an iron atom to reform [4Fe-4S] clusters, in a manner dependent on the presence of elongation factor 2 and SAM. Associates with the elongator complex and is required for tRNA Wobble base modifications mediated by the elongator complex. The elongator complex is required for multiple tRNA modifications, including mcm5U (5-methoxycarbonylmethyl uridine), mcm5s 2U (5-methoxycarbonylmethyl-2-thiouridine), and ncm5U (5-carbamoylmethyl uridine). This chain is Diphthamide biosynthesis protein 3, found in Drosophila melanogaster (Fruit fly).